Reading from the N-terminus, the 542-residue chain is MFCEQCEQTASGNGCHQWGACGKSPEVNAVQDLLVYCLRGLASVVLKAKEAAISTREADIFTCESLFATMTNVNFDQRRFTDYIQRCLEIRENLKAQLGSLDWSALANYQPNFNESLVSQGQEVSLELIEKVQDLDIFSLKLTAIYGVKGLASYTFHAQELGQEDDSVYQVIQETLVAIDRSDLNLNDWVAICLKVGAANLRAMELLDQGHTETYGHPIPTNVPLNPRLGKAILVSGHDIKQLAALLAQTANTGITVYTHGELLPAHGYPKLKEKYPHLYGHYGTAWQNQTKEFAKFPGAIVLTTNCLMPPHENYESKLFTLGPVGYAHINRLETVDGAIDFSPVIAKAQSLLGFTEISEPRQVMVGFAHNTVLSVADTVVNALKQGKIRHFFLVGGCDGAKPDRNYYTEFVEQVPEDCIVLTLACGKFRFFDKQLGSIEGLPRLMDLGQCNDAYSAIKIALGLANAFNVSVNEIPLSLIISWYEQKAIAVLLTLLHLGMQNIRLGPTLPAFISPNVLKFLSDTYHLQPITTPAKDLADCLG.

[4Fe-4S] cluster contacts are provided by C3, C6, C15, and C21. Hybrid [4Fe-2O-2S] cluster contacts are provided by H238, E262, C307, C398, C426, C451, E485, and K487. A Cysteine persulfide modification is found at C398.

This sequence belongs to the HCP family. The cofactor is [4Fe-4S] cluster. Requires hybrid [4Fe-2O-2S] cluster as cofactor.

It localises to the cytoplasm. The catalysed reaction is A + NH4(+) + H2O = hydroxylamine + AH2 + H(+). In terms of biological role, catalyzes the reduction of hydroxylamine to form NH(3) and H(2)O. The sequence is that of Hydroxylamine reductase from Microcystis aeruginosa (strain NIES-843 / IAM M-2473).